Consider the following 246-residue polypeptide: Acetoacetyl-CoA reductase (246 aa).

NADP(+) is bound by residues 12–14 (GGI) and 88–92 (CAGIT). Residues Asp94 and 147–150 (QFGQ) each bind substrate. The Proton acceptor role is filled by Tyr153. 183 to 186 (PGYV) lines the NADP(+) pocket. 184–185 (GY) is a binding site for substrate.

It belongs to the short-chain dehydrogenases/reductases (SDR) family.

The protein localises to the cytoplasm. The catalysed reaction is a (3R)-3-hydroxyacyl-CoA + NADP(+) = a 3-oxoacyl-CoA + NADPH + H(+). It participates in biopolymer metabolism; poly-(R)-3-hydroxybutanoate biosynthesis. In Allochromatium vinosum (strain ATCC 17899 / DSM 180 / NBRC 103801 / NCIMB 10441 / D) (Chromatium vinosum), this protein is Acetoacetyl-CoA reductase.